The following is a 374-amino-acid chain: RNA binding protein fox-1 homolog 3 (374 aa).

Positions 1–29 (MAQPYPPAQYPPPPQNGIPAEYAPPPPHP) are enriched in pro residues. The segment at 1–105 (MAQPYPPAQY…QQPKRLHVSN (105 aa)) is disordered. A compositionally biased stretch (polar residues) spans 49-74 (TPAQTHPEQPGTEASTQPIAGTQTVP). Residues 99–175 (KRLHVSNIPF…RKIEVNNATA (77 aa)) enclose the RRM domain. Asymmetric dimethylarginine; alternate is present on Arg-223. The residue at position 223 (Arg-223) is an Omega-N-methylarginine; alternate. Arg-319 is modified (asymmetric dimethylarginine).

In terms of processing, phosphorylated. As to expression, widely expressed in brain, including in cerebral cortex, hippocampus, thalamus, caudate/putamen, cerebellum, as well as in the spinal cord (at protein level). Not expressed in all neuronal cells within a region, in cerebellum, expression is absent in Purkinje cells (at protein level). Expressed in the retina in the ganglion cells and some cells in the inner nuclear layer, but absent from the photoreceptor cells and most cells in the inner nuclear layer (at protein level).

The protein resides in the nucleus. Its subcellular location is the cytoplasm. Functionally, pre-mRNA alternative splicing regulator. Regulates alternative splicing of RBFOX2 to enhance the production of mRNA species that are targeted for nonsense-mediated decay (NMD). The sequence is that of RNA binding protein fox-1 homolog 3 (Rbfox3) from Mus musculus (Mouse).